A 172-amino-acid chain; its full sequence is Small ribosomal subunit protein uS5 (172 aa).

The S5 DRBM domain maps to 17–80 (LREKMISVNR…DEARRKMVKV (64 aa)).

This sequence belongs to the universal ribosomal protein uS5 family. As to quaternary structure, part of the 30S ribosomal subunit. Contacts proteins S4 and S8.

Functionally, with S4 and S12 plays an important role in translational accuracy. Located at the back of the 30S subunit body where it stabilizes the conformation of the head with respect to the body. The sequence is that of Small ribosomal subunit protein uS5 from Cupriavidus taiwanensis (strain DSM 17343 / BCRC 17206 / CCUG 44338 / CIP 107171 / LMG 19424 / R1) (Ralstonia taiwanensis (strain LMG 19424)).